The chain runs to 232 residues: Clarin-2 (232 aa).

A helical membrane pass occupies residues 10-30 (YGLASLLSFSSFILIIVALVV). N-linked (GlcNAc...) asparagine glycosylation occurs at asparagine 48. 3 helical membrane passes run 101–121 (ILLL…FAIL), 139–159 (LWNV…VAAV), and 188–208 (SFWI…VVAI).

The protein belongs to the clarin family.

The protein localises to the cell projection. It localises to the stereocilium membrane. In terms of biological role, plays a key role to hearing function. Required for normal organization and maintenance of the stereocilia bundle and for mechano-electrical transduction. This is Clarin-2 from Homo sapiens (Human).